Consider the following 63-residue polypeptide: Movement protein TGBp3 (63 aa).

The chain crosses the membrane as a helical span at residues 1 to 21 (MIVYVLVGLSAFCIVLYLISQ). The Cytoplasmic segment spans residues 22–63 (GQSDCVVLITGESVRVQGCRIDGEFGSVLSKLKPFGCGSFRS).

It belongs to the Tymovirales TGBp3 protein family.

The protein resides in the host endoplasmic reticulum membrane. In terms of biological role, plays a role in viral cell-to-cell propagation, by facilitating genome transport to neighboring plant cells through plasmosdesmata. May induce the formation of granular vesicles derived from the Endoplasmic reticulum, which align on actin filaments. In Solanum tuberosum (Potato), this protein is Movement protein TGBp3.